The following is a 198-amino-acid chain: Small ribosomal subunit protein uS7 (198 aa).

This sequence belongs to the universal ribosomal protein uS7 family. In terms of assembly, part of the 30S ribosomal subunit.

In terms of biological role, one of the primary rRNA binding proteins, it binds directly to 16S rRNA where it nucleates assembly of the head domain of the 30S subunit. Is located at the subunit interface close to the decoding center. The polypeptide is Small ribosomal subunit protein uS7 (Nanoarchaeum equitans (strain Kin4-M)).